The primary structure comprises 361 residues: GTPase Obg (361 aa).

The 159-residue stretch at 1-159 (MKFVDEAFID…KNLKLELKVL (159 aa)) folds into the Obg domain. The region spanning 160–334 (ADVGLLGMPN…LIKTIYQHVK (175 aa)) is the OBG-type G domain. GTP-binding positions include 166 to 173 (GMPNAGKS), 191 to 195 (FTTLH), 213 to 216 (DLPG), 284 to 287 (NKLD), and 315 to 317 (SAL). Serine 173 and threonine 193 together coordinate Mg(2+). The disordered stretch occupies residues 339 to 361 (SEQPVEEVDPRFVPLPPESPETP). Positions 351–361 (VPLPPESPETP) are enriched in pro residues.

It belongs to the TRAFAC class OBG-HflX-like GTPase superfamily. OBG GTPase family. As to quaternary structure, monomer. Mg(2+) is required as a cofactor.

The protein localises to the cytoplasm. An essential GTPase which binds GTP, GDP and possibly (p)ppGpp with moderate affinity, with high nucleotide exchange rates and a fairly low GTP hydrolysis rate. Plays a role in control of the cell cycle, stress response, ribosome biogenesis and in those bacteria that undergo differentiation, in morphogenesis control. The protein is GTPase Obg of Polaromonas sp. (strain JS666 / ATCC BAA-500).